A 491-amino-acid polypeptide reads, in one-letter code: Chromosomal replication initiator protein DnaA (491 aa).

The interval 1-69 is domain I, interacts with DnaA modulators; the sequence is MTTWDKCLKK…TIQECHGNDL (69 aa). A domain II region spans residues 69 to 154; the sequence is LIIEYSNKKF…KEDEEYSFGL (86 aa). Residues 155 to 371 are domain III, AAA+ region; it reads PLKEKYVFDS…GALNRVLTTS (217 aa). 4 residues coordinate ATP: G199, G201, K202, and T203. The interval 372–491 is domain IV, binds dsDNA; that stretch reads KFNHKDPTIE…YELLLNKISR (120 aa).

Belongs to the DnaA family. As to quaternary structure, oligomerizes as a right-handed, spiral filament on DNA at oriC.

It is found in the cytoplasm. Plays an essential role in the initiation and regulation of chromosomal replication. ATP-DnaA binds to the origin of replication (oriC) to initiate formation of the DNA replication initiation complex once per cell cycle. Binds the DnaA box (a 9 base pair repeat at the origin) and separates the double-stranded (ds)DNA. Forms a right-handed helical filament on oriC DNA; dsDNA binds to the exterior of the filament while single-stranded (ss)DNA is stabiized in the filament's interior. The ATP-DnaA-oriC complex binds and stabilizes one strand of the AT-rich DNA unwinding element (DUE), permitting loading of DNA polymerase. After initiation quickly degrades to an ADP-DnaA complex that is not apt for DNA replication. Binds acidic phospholipids. This Francisella tularensis subsp. tularensis (strain WY96-3418) protein is Chromosomal replication initiator protein DnaA.